A 264-amino-acid polypeptide reads, in one-letter code: Thiazole synthase (264 aa).

Lys106 acts as the Schiff-base intermediate with DXP in catalysis. 1-deoxy-D-xylulose 5-phosphate is bound by residues Gly167, 193–194, and 215–216; these read AG and NT.

The protein belongs to the ThiG family. In terms of assembly, homotetramer. Forms heterodimers with either ThiH or ThiS.

The protein resides in the cytoplasm. It carries out the reaction [ThiS sulfur-carrier protein]-C-terminal-Gly-aminoethanethioate + 2-iminoacetate + 1-deoxy-D-xylulose 5-phosphate = [ThiS sulfur-carrier protein]-C-terminal Gly-Gly + 2-[(2R,5Z)-2-carboxy-4-methylthiazol-5(2H)-ylidene]ethyl phosphate + 2 H2O + H(+). It functions in the pathway cofactor biosynthesis; thiamine diphosphate biosynthesis. In terms of biological role, catalyzes the rearrangement of 1-deoxy-D-xylulose 5-phosphate (DXP) to produce the thiazole phosphate moiety of thiamine. Sulfur is provided by the thiocarboxylate moiety of the carrier protein ThiS. In vitro, sulfur can be provided by H(2)S. The polypeptide is Thiazole synthase (Xanthomonas campestris pv. campestris (strain 8004)).